A 382-amino-acid chain; its full sequence is S-adenosylmethionine decarboxylase proenzyme (382 aa).

Position 32 (F32) interacts with substrate. Residues E33 and E36 contribute to the active site. L87 provides a ligand contact to substrate. Residue S90 is the Schiff-base intermediate with substrate; via pyruvic acid of the active site. S90 carries the post-translational modification Pyruvic acid (Ser); by autocatalysis. C104 acts as the Proton donor; for catalytic activity in catalysis. F248 contacts substrate. Residues S254 and H267 each act as proton acceptor; for processing activity in the active site. E271 contributes to the substrate binding site.

The protein belongs to the eukaryotic AdoMetDC family. Heterotetramer of two alpha and two beta chains. It depends on pyruvate as a cofactor. In terms of processing, is synthesized initially as an inactive proenzyme. Formation of the active enzyme involves a self-maturation process in which the active site pyruvoyl group is generated from an internal serine residue via an autocatalytic post-translational modification. Two non-identical subunits are generated from the proenzyme in this reaction, and the pyruvate is formed at the N-terminus of the alpha chain, which is derived from the carboxyl end of the proenzyme. The post-translation cleavage follows an unusual pathway, termed non-hydrolytic serinolysis, in which the side chain hydroxyl group of the serine supplies its oxygen atom to form the C-terminus of the beta chain, while the remainder of the serine residue undergoes an oxidative deamination to produce ammonia and the pyruvoyl group blocking the N-terminus of the alpha chain.

The catalysed reaction is S-adenosyl-L-methionine + H(+) = S-adenosyl 3-(methylsulfanyl)propylamine + CO2. Its pathway is amine and polyamine biosynthesis; S-adenosylmethioninamine biosynthesis; S-adenosylmethioninamine from S-adenosyl-L-methionine: step 1/1. This is S-adenosylmethionine decarboxylase proenzyme from Leishmania donovani.